A 752-amino-acid chain; its full sequence is Multifunctional tryptophan biosynthesis protein (752 aa).

Residues 3–202 (FTLLIDNYDS…IQMKGGKWGG (200 aa)) enclose the Glutamine amidotransferase type-1 domain. 58-60 (GPG) is an L-glutamine binding site. The Nucleophile; for GATase activity role is filled by Cys-86. 136 to 137 (SL) contacts L-glutamine. Active-site for GATase activity residues include His-176 and Glu-178. An indole-3-glycerol phosphate synthase region spans residues 231–495 (ILNRIHAQRL…DTKAFLRSLI (265 aa)). The segment at 509–752 (LVKICGIRST…VEAFVKAVRG (244 aa)) is N-(5'-phosphoribosyl)anthranilate isomerase.

The catalysed reaction is N-(5-phospho-beta-D-ribosyl)anthranilate = 1-(2-carboxyphenylamino)-1-deoxy-D-ribulose 5-phosphate. The enzyme catalyses 1-(2-carboxyphenylamino)-1-deoxy-D-ribulose 5-phosphate + H(+) = (1S,2R)-1-C-(indol-3-yl)glycerol 3-phosphate + CO2 + H2O. It carries out the reaction chorismate + L-glutamine = anthranilate + pyruvate + L-glutamate + H(+). Its pathway is amino-acid biosynthesis; L-tryptophan biosynthesis; L-tryptophan from chorismate: step 1/5. The protein operates within amino-acid biosynthesis; L-tryptophan biosynthesis; L-tryptophan from chorismate: step 3/5. It participates in amino-acid biosynthesis; L-tryptophan biosynthesis; L-tryptophan from chorismate: step 4/5. Functionally, trifunctional enzyme bearing the Gln amidotransferase (GATase) domain of anthranilate synthase, indole-glycerolphosphate synthase, and phosphoribosylanthranilate isomerase activities. This chain is Multifunctional tryptophan biosynthesis protein (TRP1), found in Cryptococcus neoformans var. neoformans serotype D (strain B-3501A) (Filobasidiella neoformans).